The following is a 335-amino-acid chain: METLIELSKKMPKTELHLHIEGTFEPEQMFAIAQRNQVELKYSTVDALKAAYQFTNLQDFLDLYYQGMSVLLHEADFYDLTMAYLEKVHSENVVHVEIFFDPQGHLSRGVGFDVQIQGIYKALQDAEKKWGMTSKLIMSFLRHLSEESAFETLELAKPHLKWIDGIGLDSSEVGHPPEKFLRVFEACKNLGLKVTAHAGEEGPPDYVWQAIEQIGVDRIDHGNRALEDNKLIEAIKQRNLTLTVCPLSNLKLCVVNDMKNHPIKNMLALGLNATVNSDDPAYFGGYMNDNYASLINGTRISKEELFQLAKNGITGSWMEDHLKELHLKQLHALFA.

3 residues coordinate Zn(2+): His17, His19, and His197. Glu200 serves as the catalytic Proton donor. Asp278 contacts Zn(2+). Asp279 serves as a coordination point for substrate.

Belongs to the metallo-dependent hydrolases superfamily. Adenosine and AMP deaminases family. Adenine deaminase type 2 subfamily. It depends on Zn(2+) as a cofactor.

It catalyses the reaction adenine + H2O + H(+) = hypoxanthine + NH4(+). In terms of biological role, catalyzes the hydrolytic deamination of adenine to hypoxanthine. Plays an important role in the purine salvage pathway and in nitrogen catabolism. This is Adenine deaminase from Marinomonas sp. (strain MWYL1).